The following is a 134-amino-acid chain: MQAMLPVILILLLPCIALASTATRATPEQLRKCKFQQPWSFLDCYHEKSDFPTYWIVIVGIINILSCTFFSITIYPTFNFGWNSPNALGYPQEPDEHIPLQHIQQPLALVEYENEPQPSLPPAISYFNLTGGDD.

Residues M1 to A19 form the signal peptide. A helical membrane pass occupies residues Y54–F78.

Belongs to the adenoviridae E3_14 family. Phosphorylated on serine; O-glycosylated, but not N-glycosylated.

It is found in the host membrane. Functionally, down-regulates the EGF receptor and prevents cytolysis by TNF. This Homo sapiens (Human) protein is Early E3B 14.9 kDa protein.